The chain runs to 281 residues: Beta-etherase (281 aa).

Residues 11 to 87 (DLQLESGCTI…YLDEKYPDRP (77 aa)) form the GST N-terminal domain. The disordered stretch occupies residues 244 to 281 (GDPEPFVRQTGPAGAGGQALNKGPQTTKMPPRVAEKAD).

This sequence belongs to the GST superfamily.

It is found in the cell inner membrane. Its function is as follows. Able to degrade various dimeric lignin compounds. Catalyzes the unique and reductive cleavage of arylglycerol-beta-aryl ether. The protein is Beta-etherase (ligE) of Sphingobium sp. (strain NBRC 103272 / SYK-6).